A 151-amino-acid polypeptide reads, in one-letter code: Lipoprotein signal peptidase (151 aa).

2 helical membrane passes run 61–81 (GSQW…IWIG) and 88–107 (SRWQ…GNGI). Active-site residues include D117 and D133. The helical transmembrane segment at 128–148 (VFNLADVAINLAVLCLLIEAI) threads the bilayer.

This sequence belongs to the peptidase A8 family.

It localises to the cell inner membrane. The enzyme catalyses Release of signal peptides from bacterial membrane prolipoproteins. Hydrolyzes -Xaa-Yaa-Zaa-|-(S,diacylglyceryl)Cys-, in which Xaa is hydrophobic (preferably Leu), and Yaa (Ala or Ser) and Zaa (Gly or Ala) have small, neutral side chains.. It functions in the pathway protein modification; lipoprotein biosynthesis (signal peptide cleavage). This protein specifically catalyzes the removal of signal peptides from prolipoproteins. The chain is Lipoprotein signal peptidase from Synechococcus sp. (strain RCC307).